A 679-amino-acid chain; its full sequence is UvrABC system protein B (679 aa).

One can recognise a Helicase ATP-binding domain in the interval 31 to 414 (ENLTDGLAHQ…ELEKSGTEII (384 aa)). 44 to 51 (GVTGSGKT) serves as a coordination point for ATP. Residues 97–120 (YYDYYQPEAYVPSSDTFIEKDASI) carry the Beta-hairpin motif. Residues 436-589 (QVDDLLSEAR…QIKYNEEHGI (154 aa)) form the Helicase C-terminal domain. The UVR domain occupies 639–674 (QQQIKKLEQQMYKFAQDLEFEKAAAIRDQLHQLREQ).

It belongs to the UvrB family. In terms of assembly, forms a heterotetramer with UvrA during the search for lesions. Interacts with UvrC in an incision complex.

The protein localises to the cytoplasm. Functionally, the UvrABC repair system catalyzes the recognition and processing of DNA lesions. A damage recognition complex composed of 2 UvrA and 2 UvrB subunits scans DNA for abnormalities. Upon binding of the UvrA(2)B(2) complex to a putative damaged site, the DNA wraps around one UvrB monomer. DNA wrap is dependent on ATP binding by UvrB and probably causes local melting of the DNA helix, facilitating insertion of UvrB beta-hairpin between the DNA strands. Then UvrB probes one DNA strand for the presence of a lesion. If a lesion is found the UvrA subunits dissociate and the UvrB-DNA preincision complex is formed. This complex is subsequently bound by UvrC and the second UvrB is released. If no lesion is found, the DNA wraps around the other UvrB subunit that will check the other stand for damage. This Haemophilus influenzae (strain 86-028NP) protein is UvrABC system protein B.